We begin with the raw amino-acid sequence, 226 residues long: MEPIKNLPRLCRTLGYEFKNLELLTQALTHRSAANKHNERLEFLGDSILSIVISDALYHQFPKATEGDLSRMRATLVRGDTLTLIAKAFKLGDYLFLGPGELKSGGFRRESILADAVEAIIGAIYLDSDLEVCRKLLLHWYAERLAEIQPGVNQKDAKTLLQEYLQGLKKPLPDYQVINIEGDAHDQTFTVECRIDDLSESVIGVASSRRKAEQIAAAQVLELLKK.

The 123-residue stretch at 7-129 (LPRLCRTLGY…IIGAIYLDSD (123 aa)) folds into the RNase III domain. Residue glutamate 42 participates in Mg(2+) binding. Residue aspartate 46 is part of the active site. Mg(2+)-binding residues include aspartate 115 and glutamate 118. Glutamate 118 is an active-site residue. The DRBM domain maps to 156–226 (DAKTLLQEYL…AAQVLELLKK (71 aa)).

It belongs to the ribonuclease III family. In terms of assembly, homodimer. Mg(2+) is required as a cofactor.

The protein resides in the cytoplasm. It carries out the reaction Endonucleolytic cleavage to 5'-phosphomonoester.. Its function is as follows. Digests double-stranded RNA. Involved in the processing of primary rRNA transcript to yield the immediate precursors to the large and small rRNAs (23S and 16S). Processes some mRNAs, and tRNAs when they are encoded in the rRNA operon. Processes pre-crRNA and tracrRNA of type II CRISPR loci if present in the organism. The sequence is that of Ribonuclease 3 from Shewanella sp. (strain MR-7).